The sequence spans 258 residues: Axonemal dynein light intermediate polypeptide 1 (258 aa).

2 disordered regions span residues 1-60 (MIPP…CVPD) and 202-231 (DLER…EEKK). Residues 176-255 (MRKALQAEQG…LKAQLEGIIA (80 aa)) are a coiled coil.

It belongs to the inner dynein arm light chain family. As to quaternary structure, interacts with CFAP45. Interacts with DYNC1H1.

It is found in the cell projection. It localises to the cilium. The protein resides in the flagellum. Its subcellular location is the dynein axonemal particle. The protein localises to the cytoplasm. Involved in sperm flagellum assembly. The protein is Axonemal dynein light intermediate polypeptide 1 of Rattus norvegicus (Rat).